The following is a 178-amino-acid chain: E1B protein, small T-antigen (178 aa).

Belongs to the adenoviridae E1B 19 kDa protein family.

Its subcellular location is the host cell membrane. It is found in the host nucleus envelope. The protein localises to the host nucleus lamina. In terms of biological role, putative adenovirus Bcl-2 homolog that inhibits apoptosis induced by TNF or FAS pathways, as well as p53-mediated apoptosis. Without E1B 19K function, virus production is compromised because of premature death of host cell. Interacts with Bax protein in cell lysates. This Human adenovirus B serotype 7 (HAdV-7) protein is E1B protein, small T-antigen.